A 559-amino-acid polypeptide reads, in one-letter code: Formate--tetrahydrofolate ligase (559 aa).

68–75 (TPAGEGKT) contacts ATP.

This sequence belongs to the formate--tetrahydrofolate ligase family.

It carries out the reaction (6S)-5,6,7,8-tetrahydrofolate + formate + ATP = (6R)-10-formyltetrahydrofolate + ADP + phosphate. Its pathway is one-carbon metabolism; tetrahydrofolate interconversion. The polypeptide is Formate--tetrahydrofolate ligase (Rhizobium rhizogenes (strain K84 / ATCC BAA-868) (Agrobacterium radiobacter)).